A 140-amino-acid polypeptide reads, in one-letter code: MSALQELSGITGKYDSSVVDHFENPRNVGSLDKTDPRVGTGMVGAPACGDVMKLQIKVGKDNVIEDAKFKTFGCGSAIASSSLATEWIKKKTIDESLKISNRDIAKKLSLPPIKLHCSMLAEDAIKMAIKDFLDKNKPSP.

It belongs to the NifU family. In terms of assembly, component of the core Fe-S cluster (ISC) assembly machinery. It depends on [2Fe-2S] cluster as a cofactor.

It is found in the mitosome matrix. It functions in the pathway cofactor biosynthesis; iron-sulfur cluster biosynthesis. Its function is as follows. Scaffold protein for the de novo synthesis of iron-sulfur (Fe-S) clusters within mitosomes, which is required for maturation of both [2Fe-2S] and [4Fe-4S] proteins. First, a [2Fe-2S] cluster is transiently assembled on the scaffold protein ISU1. In a second step, the cluster is released from ISU1, transferred to a glutaredoxin, followed by the formation of [2Fe-2S] proteins, the synthesis of [4Fe-4S] clusters and their target-specific insertion into the recipient apoproteins. Cluster assembly on ISU1 depends on the function of the cysteine desulfurase complex NFS1-ISD11, which serves as the sulfur donor for cluster synthesis, the iron-binding protein frataxin as the putative iron donor, and the electron transfer chain comprised of ferredoxin reductase and ferredoxin, which receive their electrons from NADH. The sequence is that of Iron sulfur cluster assembly protein 1 (ISU1) from Encephalitozoon cuniculi (strain GB-M1) (Microsporidian parasite).